The primary structure comprises 254 residues: Distal membrane-arm assembly complex protein 2 (254 aa).

Residue S250 is modified to Phosphoserine.

The protein belongs to the ATP synthase subunit s family. In terms of assembly, interacts with incompletely assembled mitochondrial NADH:ubiquinone oxidoreductase complex (complex I).

It is found in the mitochondrion. Functionally, required for the assembly of the mitochondrial NADH:ubiquinone oxidoreductase complex (complex I). Involved in the assembly of the distal region of complex I. The chain is Distal membrane-arm assembly complex protein 2 from Rattus norvegicus (Rat).